Reading from the N-terminus, the 950-residue chain is MLLLGISILALAWRPAGSSEPEWEVVVPIRRDPDINGRHYYRRGTEDSGDQGLIFQITAFQQDFYLHLTPDAQFLAPAFATEYLGVPLQRLTGSSLDLRRCFYSGYVNAEPDSFAAVSLCGGLRGAFGYRGAEYVISPLPNTSAPEAQRHSQGAHLLQRRGAPVGPSGDPTSRCGVASGWNPAILRALDPYKPRRTGAGESHNRRRSGRAKRFVSIPRYVETLVVADESMVKFHGADLEHYLLTLLATAARLYRHPSILNPINIVVVKVLLLGDRDTGPKVTGNAALTLRNFCAWQKKLNKVSDKHPEYWDTAILFTRQDLCGATTCDTLGMADVGTMCDPKRSCSVIEDDGLPSAFTTAHELGHVFNMPHDNVKVCEEVFGKLRANHMMSPTLIQIDRANPWSACSAAIITDFLDSGHGDCLLDQPSKPITLPEDLPGTSYSLSQQCELAFGVGSKPCPYMQYCTKLWCTGKAKGQMVCQTRHFPWADGTSCGEGKFCLKGACVERHNPNKYRVDGSWAKWEPYGSCSRTCGGGVQLARRQCSNPTPANGGKYCEGVRVKYRSCNLEPCPSSASGKSFREEQCEAFNGYNHSTNRLTLAVAWVPKYSGVSPRDKCKLICRANGTGYFYVLAPKVVDGTLCTPDSTSVCVQGKCIKAGCDGNLGSKKKFDKCGVCGGDNKSCKRVTGLFTKPMHGYNFVVAIPAGASSIDIRQRGYKGLIGDDNYLALKNSQGKYLLNGHFVVSAVERDLVVKGSVLRYSGTGTAVESLQASRPILEPLTVEVLSVGKMTPPRVRYSFYLPKEPREDKSTRPKDPRGSPVLRNSVLSLSNQVEQPDNRPPARWVAGSWGPCSVSCGSGLQKRAVDCRDSPGQQGASACDVDHRPLEKRACGEPCPTWELGNWSPCSKSCGRGFKRRPLKCVGHGGRLLARDQCDLRRKPQELDFCVLRPC.

Positions 1-18 (MLLLGISILALAWRPAGS) are cleaved as a signal peptide. Positions 19 to 212 (SEPEWEVVVP…NRRRSGRAKR (194 aa)) are excised as a propeptide. Asn-141 carries N-linked (GlcNAc...) asparagine glycosylation. The disordered stretch occupies residues 144–172 (APEAQRHSQGAHLLQRRGAPVGPSGDPTS). The Cysteine switch signature appears at 172-179 (SRCGVASG). Residue Cys-174 coordinates Zn(2+). The Peptidase M12B domain occupies 218-427 (RYVETLVVAD…GHGDCLLDQP (210 aa)). Disulfide bonds link Cys-293–Cys-345, Cys-322–Cys-327, Cys-339–Cys-422, Cys-377–Cys-406, Cys-448–Cys-470, Cys-459–Cys-480, Cys-465–Cys-499, Cys-493–Cys-504, Cys-528–Cys-565, Cys-532–Cys-570, and Cys-543–Cys-555. Residue His-361 coordinates Zn(2+). Residue Glu-362 is part of the active site. His-365 and His-371 together coordinate Zn(2+). The 88-residue stretch at 428-515 (SKPITLPEDL…ERHNPNKYRV (88 aa)) folds into the Disintegrin domain. One can recognise a TSP type-1 1 domain in the interval 516–571 (DGSWAKWEPYGSCSRTCGGGVQLARRQCSNPTPANGGKYCEGVRVKYRSCNLEPCP). Asn-591, Asn-623, and Asn-679 each carry an N-linked (GlcNAc...) asparagine glycan. The tract at residues 701 to 838 (AIPAGASSID…SNQVEQPDNR (138 aa)) is spacer. Residues 798-822 (FYLPKEPREDKSTRPKDPRGSPVLR) are disordered. A compositionally biased stretch (basic and acidic residues) spans 802–816 (KEPREDKSTRPKDPR). TSP type-1 domains lie at 839 to 895 (PPAR…EPCP) and 896 to 949 (TWEL…VLRP).

Requires Zn(2+) as cofactor. In terms of processing, the precursor is cleaved by a furin endopeptidase. Post-translationally, glycosylated. Can be O-fucosylated by POFUT2 on a serine or a threonine residue found within the consensus sequence C1-X(2)-(S/T)-C2-G of the TSP type-1 repeat domains where C1 and C2 are the first and second cysteine residue of the repeat, respectively. Fucosylated repeats can then be further glycosylated by the addition of a beta-1,3-glucose residue by the glucosyltransferase, B3GALTL. Fucosylation mediates the efficient secretion of ADAMTS family members. Can be C-glycosylated with one or two mannose molecules on tryptophan residues within the consensus sequence W-X-X-W of the TPRs. Also N-glycosylated. These other glycosylations can also facilitate secretion. As to expression, in the adult colon, highly expressed in the muscularis externa (inner circular smooth muscle and outer longitudinal smooth muscle), muscularis mucosa, submucosal glands, crypt, villi epithelial cells, goblet cells and lamina propria. Expressed at perimuscular and peritendious areas in the developing limbs.

The protein localises to the secreted. It localises to the extracellular space. It is found in the extracellular matrix. Its subcellular location is the cell surface. Metalloprotease which has proteolytic activity against the proteoglycan VCAN, cleaving it at the 'Glu-1401-|-1402-Ala' site. Cleaves VCAN in the pericellular matrix surrounding myoblasts, facilitating myoblast contact and fusion which is required for skeletal muscle development and regeneration. This chain is A disintegrin and metalloproteinase with thrombospondin motifs 15 (Adamts15), found in Mus musculus (Mouse).